We begin with the raw amino-acid sequence, 572 residues long: Proline--tRNA ligase (572 aa).

It belongs to the class-II aminoacyl-tRNA synthetase family. ProS type 1 subfamily. In terms of assembly, homodimer.

The protein localises to the cytoplasm. It carries out the reaction tRNA(Pro) + L-proline + ATP = L-prolyl-tRNA(Pro) + AMP + diphosphate. In terms of biological role, catalyzes the attachment of proline to tRNA(Pro) in a two-step reaction: proline is first activated by ATP to form Pro-AMP and then transferred to the acceptor end of tRNA(Pro). As ProRS can inadvertently accommodate and process non-cognate amino acids such as alanine and cysteine, to avoid such errors it has two additional distinct editing activities against alanine. One activity is designated as 'pretransfer' editing and involves the tRNA(Pro)-independent hydrolysis of activated Ala-AMP. The other activity is designated 'posttransfer' editing and involves deacylation of mischarged Ala-tRNA(Pro). The misacylated Cys-tRNA(Pro) is not edited by ProRS. The protein is Proline--tRNA ligase of Edwardsiella ictaluri (strain 93-146).